A 248-amino-acid polypeptide reads, in one-letter code: MKKLVLIRHGESTWNKENRFTGWTDVDLSDEGRQQATEAAEVLKREGYVFDVAYTSVLKRAIRTLWTVLDGMDLMWIPVHRSWRLNERHYGALQGLNKAETAAKFGEDQVKIWRRSYDIPPPVLTADDPRFPGHDPRYQSLTKEELPLTECLKDTVARFLPLWHDTIAPAIRSGQRVIIAAHGNSLRALVKYLDGVSEADIVELNIPTGMPLVYELDDDLKPLNRYYLGDPEKVKAAMEAVAAQGKKK.

Residues 8–15 (RHGESTWN), 21–22 (TG), Arg-60, 87–90 (ERHY), Lys-98, 114–115 (RR), and 183–184 (GN) each bind substrate. His-9 serves as the catalytic Tele-phosphohistidine intermediate. The active-site Proton donor/acceptor is Glu-87.

It belongs to the phosphoglycerate mutase family. BPG-dependent PGAM subfamily.

It catalyses the reaction (2R)-2-phosphoglycerate = (2R)-3-phosphoglycerate. Its pathway is carbohydrate degradation; glycolysis; pyruvate from D-glyceraldehyde 3-phosphate: step 3/5. Its function is as follows. Catalyzes the interconversion of 2-phosphoglycerate and 3-phosphoglycerate. This chain is 2,3-bisphosphoglycerate-dependent phosphoglycerate mutase, found in Solibacter usitatus (strain Ellin6076).